The sequence spans 657 residues: Heat shock protein hsp-6 (657 aa).

A mitochondrion-targeting transit peptide spans 1 to 27; the sequence is MLSARSFLSSARTIARSSLMSARSLSD. The tract at residues 637–657 is disordered; that stretch reads KNSGGDAQEAKTAEEPKKEQN. The span at 644 to 657 shows a compositional bias: basic and acidic residues; the sequence is QEAKTAEEPKKEQN.

Belongs to the heat shock protein 70 family.

The protein resides in the mitochondrion. The sequence is that of Heat shock protein hsp-6 from Caenorhabditis elegans.